Consider the following 97-residue polypeptide: Cytochrome c oxidase subunit 4 isoform 1, mitochondrial (97 aa).

A mitochondrion-targeting transit peptide spans 1-22 (MLATRVFNLIGRRAISTSVCVR). The residue at position 29 (K29) is an N6-acetyllysine; alternate. K29 carries the post-translational modification N6-succinyllysine; alternate. N6-acetyllysine is present on K53. Residues S56 and S58 each carry the phosphoserine modification. An N6-acetyllysine; alternate modification is found at K60. At K60 the chain carries N6-succinyllysine; alternate. Position 67 is an N6-acetyllysine (K67).

Belongs to the cytochrome c oxidase IV family. Component of the cytochrome c oxidase (complex IV, CIV), a multisubunit enzyme composed of 14 subunits. The complex is composed of a catalytic core of 3 subunits MT-CO1, MT-CO2 and MT-CO3, encoded in the mitochondrial DNA, and 11 supernumerary subunits COX4I, COX5A, COX5B, COX6A, COX6B, COX6C, COX7A, COX7B, COX7C, COX8 and NDUFA4, which are encoded in the nuclear genome. The complex exists as a monomer or a dimer and forms supercomplexes (SCs) in the inner mitochondrial membrane with NADH-ubiquinone oxidoreductase (complex I, CI) and ubiquinol-cytochrome c oxidoreductase (cytochrome b-c1 complex, complex III, CIII), resulting in different assemblies (supercomplex SCI(1)III(2)IV(1) and megacomplex MCI(2)III(2)IV(2)). Interacts with PHB2; the interaction decreases in absence of SPHK2. Interacts with AFG1L. Interacts with ABCB7; this interaction allows the regulation of cellular iron homeostasis and cellular reactive oxygen species (ROS) levels in cardiomyocytes. Interacts with FLVCR2; this interaction occurs in the absence of heme and is disrupted upon heme binding. Interacts with IRGC.

The protein localises to the mitochondrion inner membrane. The protein operates within energy metabolism; oxidative phosphorylation. Component of the cytochrome c oxidase, the last enzyme in the mitochondrial electron transport chain which drives oxidative phosphorylation. The respiratory chain contains 3 multisubunit complexes succinate dehydrogenase (complex II, CII), ubiquinol-cytochrome c oxidoreductase (cytochrome b-c1 complex, complex III, CIII) and cytochrome c oxidase (complex IV, CIV), that cooperate to transfer electrons derived from NADH and succinate to molecular oxygen, creating an electrochemical gradient over the inner membrane that drives transmembrane transport and the ATP synthase. Cytochrome c oxidase is the component of the respiratory chain that catalyzes the reduction of oxygen to water. Electrons originating from reduced cytochrome c in the intermembrane space (IMS) are transferred via the dinuclear copper A center (CU(A)) of subunit 2 and heme A of subunit 1 to the active site in subunit 1, a binuclear center (BNC) formed by heme A3 and copper B (CU(B)). The BNC reduces molecular oxygen to 2 water molecules using 4 electrons from cytochrome c in the IMS and 4 protons from the mitochondrial matrix. This Sus scrofa (Pig) protein is Cytochrome c oxidase subunit 4 isoform 1, mitochondrial (COX4I1).